The chain runs to 251 residues: CDP-diacylglycerol pyrophosphatase (251 aa).

The helical transmembrane segment at 4–24 threads the bilayer; it reads AGLLFLVMIVIAVVASGIGYW.

It belongs to the Cdh family.

The protein resides in the cell inner membrane. The enzyme catalyses a CDP-1,2-diacyl-sn-glycerol + H2O = a 1,2-diacyl-sn-glycero-3-phosphate + CMP + 2 H(+). It functions in the pathway phospholipid metabolism; CDP-diacylglycerol degradation; phosphatidate from CDP-diacylglycerol: step 1/1. This is CDP-diacylglycerol pyrophosphatase from Escherichia coli O8 (strain IAI1).